The chain runs to 360 residues: Mannonate dehydratase (360 aa).

It belongs to the mannonate dehydratase family. Requires Fe(2+) as cofactor. Mn(2+) serves as cofactor.

It carries out the reaction D-mannonate = 2-dehydro-3-deoxy-D-gluconate + H2O. Its pathway is carbohydrate metabolism; pentose and glucuronate interconversion. Catalyzes the dehydration of D-mannonate. The sequence is that of Mannonate dehydratase (uxuA) from Thermotoga maritima (strain ATCC 43589 / DSM 3109 / JCM 10099 / NBRC 100826 / MSB8).